A 383-amino-acid chain; its full sequence is Acetylornithine deacetylase (383 aa).

Residue His-80 coordinates Zn(2+). Asp-82 is a catalytic residue. Asp-112 contacts Zn(2+). Glu-144 is an active-site residue. Positions 145, 169, and 355 each coordinate Zn(2+).

This sequence belongs to the peptidase M20A family. ArgE subfamily. In terms of assembly, homodimer. It depends on Zn(2+) as a cofactor. The cofactor is Co(2+). Requires glutathione as cofactor.

It is found in the cytoplasm. It carries out the reaction N(2)-acetyl-L-ornithine + H2O = L-ornithine + acetate. The protein operates within amino-acid biosynthesis; L-arginine biosynthesis; L-ornithine from N(2)-acetyl-L-ornithine (linear): step 1/1. Functionally, catalyzes the hydrolysis of the amide bond of N(2)-acetylated L-amino acids. Cleaves the acetyl group from N-acetyl-L-ornithine to form L-ornithine, an intermediate in L-arginine biosynthesis pathway, and a branchpoint in the synthesis of polyamines. In Escherichia coli O8 (strain IAI1), this protein is Acetylornithine deacetylase.